The primary structure comprises 200 residues: MARCKS-related protein (200 aa).

The interval 1–200 (MGSQSSKAPR…PTPASAEQNE (200 aa)) is disordered. A lipid anchor (N-myristoyl glycine) is attached at G2. Phosphothreonine is present on T14. Residues 16–26 (EEAAGASPAKA) are compositionally biased toward low complexity. Phosphoserine is present on residues S22, S36, and S48. Residues 53–64 (GTDEAAGATGDA) show a composition bias toward low complexity. S71 bears the Phosphoserine mark. Residues 74–85 (AEAKGEVAPKET) are compositionally biased toward basic and acidic residues. A Phosphothreonine modification is found at T85. Residues 86–98 (PKKKKKFSFKKPF) show a composition bias toward basic residues. Residues 87-110 (KKKKKFSFKKPFKLSGLSFKRNRK) form an effector domain involved in lipid-binding and calmodulin-binding region. S93, S101, and S104 each carry phosphoserine; by PKC. The residue at position 119 (S119) is a Phosphoserine. S120 is modified (phosphoserine; by MAPK8). 2 positions are modified to phosphoserine: S132 and S135. Phosphothreonine; by MAPK8 is present on T148. 3 positions are modified to phosphoserine: S151, S162, and S165. A compositionally biased stretch (low complexity) spans 156–165 (AKGAEASAAS). Position 170 is a phosphothreonine (T170). Over residues 178-200 (AAEPSTPSGPESGPTPASAEQNE) the composition is skewed to low complexity. T183 carries the phosphothreonine; by MAPK8 modification. T192 carries the phosphothreonine modification.

This sequence belongs to the MARCKS family. In terms of assembly, binds to filamentous actin (F-actin), but not to monomeric G-actin, independently of its phosphorylation status. Interacts with calmodulin. Post-translationally, phosphorylated. Phosphorylation at Ser-120 and Thr-183 is non-redundantly catalyzed by MAPK8 in vivo. Phosphorylation at Thr-148 is preferentially catalyzed by MAPK8 in vivo, but this modification can also be catalyzed by other kinases in the absence of MAPK8. May be phosphorylated by protein kinase C, which disrupts the interaction with calmodulin. In terms of tissue distribution, expressed at high levels in brain cortex and hippocampus, including dentate gyrus, anterior olfactory nucleus, primary olfactory cortex, entorhinal cortex, medial preoptic area and dorsomedial hypothalamic nucleus (at protein level). Expressed in neuronal cells (at protein level). Detected in the retina. Strongly expressed in testis and uterus; expressed at lower levels in cerebellum, cerebrum, adipose tissue, spleen, kidney, thyroid, liver, lung, skeletal muscle and heart. Detected in T-cells and B-cells.

It localises to the cytoplasm. Its subcellular location is the cytoskeleton. The protein resides in the cell membrane. Functionally, involved in the control of cell movement by regulating actin cytoskeleton homeostasis and filopodium and lamellipodium formation. When unphosphorylated, induces cell migration. When phosphorylated by MAPK8, induces actin bundles formation and stabilization, thereby reducing actin plasticity, hence restricting cell movement, including neuronal migration. May be involved in coupling the protein kinase C and calmodulin signal transduction systems. The protein is MARCKS-related protein (Marcksl1) of Mus musculus (Mouse).